The following is a 499-amino-acid chain: Serine/threonine-protein phosphatase 5 (499 aa).

The disordered stretch occupies residues 1–23; the sequence is MAMAEGERTECAEPPRDEPPADG. Alanine 2 is subject to N-acetylalanine. TPR repeat units lie at residues 28 to 61, 62 to 95, and 96 to 129; these read AEEL…NPSN, AIYY…DKKY, and IKGY…KPHD. The interval 184 to 499 is catalytic; that stretch reads GKVTISFMKE…ANTLLQLGMM (316 aa). 3 residues coordinate Mn(2+): aspartate 242, histidine 244, and aspartate 271. A substrate-binding site is contributed by histidine 244. Substrate contacts are provided by residues arginine 275 and 303–304; that span reads NH. Asparagine 303 contacts Mn(2+). Histidine 304 functions as the Proton donor/acceptor in the catalytic mechanism. Mn(2+) is bound at residue histidine 352. Substrate is bound by residues arginine 400 and histidine 427. Histidine 427 contributes to the Mn(2+) binding site. The tract at residues 495–499 is required for autoinhibition; that stretch reads QLGMM.

It belongs to the PPP phosphatase family. PP-5 (PP-T) subfamily. In terms of assembly, probably forms a complex composed of chaperones HSP90 and HSP70, co-chaperones STIP1/HOP, CDC37, PPP5C, PTGES3/p23, TSC1 and client protein TSC2. Probably forms a complex composed of chaperones HSP90 and HSP70, co-chaperones CDC37, PPP5C, TSC1 and client protein TSC2, CDK4, AKT, RAF1 and NR3C1; this complex does not contain co-chaperones STIP1/HOP and PTGES3/p23. Part of a complex with HSP90/HSP90AA1 and steroid receptors. Interacts (via TPR repeats) with HSP90AA1 (via TPR repeat-binding motif) or HSPA1A/HSPA1B; the interaction is direct and activates the phosphatase activity. Dissociates from HSPA1A/HSPA1B and HSP90AA1 in response to arachidonic acid. Interacts with CPNE1 (via VWFA domain). Interacts with CDC16, CDC27. Interacts with KLHDC10 (via the 6 Kelch repeats); inhibits the phosphatase activity on MAP3K5. Interacts with ATM and ATR; both interactions are induced by DNA damage and enhance ATM and ATR kinase activity. Interacts with RAD17; reduced by DNA damage. Interacts with nuclear receptors such as NR3C1/GCR and PPARG (activated by agonist); regulates their transactivation activities. Interacts (via TPR repeats) with S100 proteins S100A1, S100A2, S100A6, S100B and S100P; the interactions are calcium-dependent, strongly activate PPP5C phosphatase activity and compete with HSP90AA1 and MAP3K5 interactions. Interacts with SMAD2 and SMAD3 but not with SMAD1; decreases SMAD3 phosphorylation and protein levels. Interacts (via TPR repeats) with CRY1 and CRY2; the interaction with CRY2 down-regulates the phosphatase activity on CSNK1E. Interacts (via TPR repeats) with the active form of RAC1, GNA12 or GNA13; these interactions activate the phosphatase activity and translocate PPP5C to the cell membrane. Interacts with FLCN. Requires Mg(2+) as cofactor. Mn(2+) serves as cofactor. Post-translationally, activated by at least two different proteolytic cleavages producing a 56 kDa and a 50 kDa form. Ubiquitous.

The protein resides in the nucleus. It localises to the cytoplasm. Its subcellular location is the cell membrane. The catalysed reaction is O-phospho-L-seryl-[protein] + H2O = L-seryl-[protein] + phosphate. It catalyses the reaction O-phospho-L-threonyl-[protein] + H2O = L-threonyl-[protein] + phosphate. Its activity is regulated as follows. Autoinhibited. In the autoinhibited state, the TPR domain interacts with the catalytic region and prevents substrate access to the catalytic pocket. Allosterically activated by various polyunsaturated fatty acids, free long-chain fatty-acids and long-chain fatty acyl-CoA esters, arachidonic acid being the most effective activator. HSP90A and probably RAC1, GNA12 and GNA13 can also release the autoinhibition by the TPR repeat. Activation by RAC1, GNA12 and GNA13 is synergistic with the one produced by fatty acids binding. Inhibited by okadaic acid. Its function is as follows. Serine/threonine-protein phosphatase that dephosphorylates a myriad of proteins involved in different signaling pathways including the kinases CSNK1E, ASK1/MAP3K5, PRKDC and RAF1, the nuclear receptors NR3C1, PPARG, ESR1 and ESR2, SMAD proteins and TAU/MAPT. Implicated in wide ranging cellular processes, including apoptosis, differentiation, DNA damage response, cell survival, regulation of ion channels or circadian rhythms, in response to steroid and thyroid hormones, calcium, fatty acids, TGF-beta as well as oxidative and genotoxic stresses. Participates in the control of DNA damage response mechanisms such as checkpoint activation and DNA damage repair through, for instance, the regulation ATM/ATR-signaling and dephosphorylation of PRKDC and TP53BP1. Inhibits ASK1/MAP3K5-mediated apoptosis induced by oxidative stress. Plays a positive role in adipogenesis, mainly through the dephosphorylation and activation of PPARG transactivation function. Also dephosphorylates and inhibits the anti-adipogenic effect of NR3C1. Regulates the circadian rhythms, through the dephosphorylation and activation of CSNK1E. May modulate TGF-beta signaling pathway by the regulation of SMAD3 phosphorylation and protein expression levels. Dephosphorylates and may play a role in the regulation of TAU/MAPT. Through their dephosphorylation, may play a role in the regulation of ions channels such as KCNH2. Dephosphorylate FNIP1, disrupting interaction with HSP90AA1/Hsp90. This Homo sapiens (Human) protein is Serine/threonine-protein phosphatase 5 (PPP5C).